The chain runs to 178 residues: CCHC-type zinc finger nucleic acid binding protein (178 aa).

Ser2 carries the N-acetylserine modification. The CCHC-type 1 zinc finger occupies 4-21 (NECFKCGRSGHWARECPT). Lys8 is subject to N6-acetyllysine. 2 positions are modified to omega-N-methylarginine; by PRMT1: Arg25 and Arg27. The tract at residues 25-38 (RGRGMRSRGRGGFT) is RNA-binding Arg/Gly-rich region (RGG-box). Arg32 and Arg34 each carry omega-N-methylarginine. Ser49 carries the post-translational modification Phosphoserine. 6 CCHC-type zinc fingers span residues 52–69 (DICYRCGESGHLAKDCDL), 72–90 (DEACYNCGRGGHIAKDCKE), 97–114 (QCCYNCGKPGHLARDCDH), 118–135 (QKCYSCGEFGHIQKDCTK), 136–153 (VKCYRCGETGHVAINCSK), and 157–174 (VNCYRCGESGHLARECTI). An omega-N-methylarginine mark is found at Asp72, Gly79, and Arg80.

As to quaternary structure, associates with the 40S ribosomal subunit, the 80S ribosome and with polysomes. Arginine methylation by PRMT1 in the Arg/Gly-rich region impedes RNA binding.

The protein resides in the nucleus. The protein localises to the cytoplasm. It localises to the endoplasmic reticulum. Single-stranded DNA-binding protein that preferentially binds to the sterol regulatory element (SRE) sequence 5'-GTGCGGTG-3', and thereby mediates transcriptional repression. Has a role as transactivator of the Myc promoter. Binds single-stranded RNA in a sequence-specific manner. Binds G-rich elements in target mRNA coding sequences. Prevents G-quadruplex structure formation in vitro, suggesting a role in supporting translation by resolving stable structures on mRNAs. The chain is CCHC-type zinc finger nucleic acid binding protein from Mus musculus (Mouse).